Here is a 719-residue protein sequence, read N- to C-terminus: 1,4-alpha-glucan branching enzyme GlgB (719 aa).

The active-site Nucleophile is the aspartate 400. Residue glutamate 453 is the Proton donor of the active site.

The protein belongs to the glycosyl hydrolase 13 family. GlgB subfamily. As to quaternary structure, monomer.

The enzyme catalyses Transfers a segment of a (1-&gt;4)-alpha-D-glucan chain to a primary hydroxy group in a similar glucan chain.. It participates in glycan biosynthesis; glycogen biosynthesis. Catalyzes the formation of the alpha-1,6-glucosidic linkages in glycogen by scission of a 1,4-alpha-linked oligosaccharide from growing alpha-1,4-glucan chains and the subsequent attachment of the oligosaccharide to the alpha-1,6 position. The chain is 1,4-alpha-glucan branching enzyme GlgB from Chlamydia caviae (strain ATCC VR-813 / DSM 19441 / 03DC25 / GPIC) (Chlamydophila caviae).